The following is a 125-amino-acid chain: Small ribosomal subunit protein uS13 (125 aa).

This sequence belongs to the universal ribosomal protein uS13 family. As to quaternary structure, part of the 30S ribosomal subunit. Forms a loose heterodimer with protein S19. Forms two bridges to the 50S subunit in the 70S ribosome.

Located at the top of the head of the 30S subunit, it contacts several helices of the 16S rRNA. In the 70S ribosome it contacts the 23S rRNA (bridge B1a) and protein L5 of the 50S subunit (bridge B1b), connecting the 2 subunits; these bridges are implicated in subunit movement. Contacts the tRNAs in the A and P-sites. The protein is Small ribosomal subunit protein uS13 of Rickettsia rickettsii (strain Iowa).